We begin with the raw amino-acid sequence, 498 residues long: Elastase (498 aa).

Positions 1-23 are cleaved as a signal peptide; it reads MKKVSTLDLLFVAIMGVSPAAFA. The propeptide occupies 24-197; it reads ADLIDVSKLP…VLDQWEGLAH (174 aa). C227 and C255 are joined by a disulfide. Phosphothreonine is present on T236. D333 is a binding site for Ca(2+). H337 provides a ligand contact to Zn(2+). E338 is a catalytic residue. 2 residues coordinate Zn(2+): H341 and E361. E369, E372, D380, and L382 together coordinate Ca(2+). The active-site Proton donor is the H420. C467 and C494 are disulfide-bonded.

Belongs to the peptidase M4 family. Ca(2+) is required as a cofactor. The cofactor is Zn(2+). Post-translationally, made as a pre-pro-protein which is exported to the periplasm. Probably autocatalyzes cleavage of its pro-peptide. The pro-peptide can be secreted with mature elastase.

It localises to the secreted. The enzyme catalyses Hydrolysis of proteins including elastin, collagen types III and IV, fibronectin and immunoglobulin A, generally with bulky hydrophobic group at P1'. Insulin B chain cleavage pattern identical to that of thermolysin, but specificity differs in other respects.. Its function is as follows. Cleaves host elastase, collagen, IgI and several complement components as well as endogenous pro-aminopeptidase, pro-chitin-binding protein (cbpD). Cleaves its own pro-peptide. Involved in the pathogenesis of P.aeruginosa infections. The sequence is that of Elastase (lasB) from Pseudomonas aeruginosa (strain UCBPP-PA14).